The chain runs to 513 residues: uncharacterized protein (513 aa).

Residues 254–447 (IPQLPSKLLE…INTIRFHHNL (194 aa)) enclose the HDOD domain.

This is an uncharacterized protein from Treponema pallidum (strain Nichols).